Consider the following 548-residue polypeptide: Protoporphyrinogen oxidase, chloroplastic (548 aa).

The N-terminal 50 residues, 1 to 50 (MTTTPIANHPNIFTHQSSSSPLAFLNRTSFIPFSSISKRNSVNCNGWRTR), are a transit peptide targeting the chloroplast. Residues 78-83 (GAGISG), 101-102 (EA), and 123-126 (GPNS) each bind FAD. Over residues 265–279 (KERSSTPKAPRDPRL) the composition is skewed to basic and acidic residues. The tract at residues 265 to 287 (KERSSTPKAPRDPRLPKPKGQTV) is disordered. 522 to 524 (VAL) lines the FAD pocket.

The protein belongs to the protoporphyrinogen/coproporphyrinogen oxidase family. Protoporphyrinogen oxidase subfamily. Homodimer. FAD is required as a cofactor.

The protein resides in the plastid. Its subcellular location is the chloroplast. It carries out the reaction protoporphyrinogen IX + 3 O2 = protoporphyrin IX + 3 H2O2. The protein operates within porphyrin-containing compound metabolism; protoporphyrin-IX biosynthesis; protoporphyrin-IX from protoporphyrinogen-IX: step 1/1. It functions in the pathway porphyrin-containing compound metabolism; chlorophyll biosynthesis. In terms of biological role, catalyzes the 6-electron oxidation of protoporphyrinogen-IX to form protoporphyrin-IX. This Nicotiana tabacum (Common tobacco) protein is Protoporphyrinogen oxidase, chloroplastic (PPXI).